We begin with the raw amino-acid sequence, 474 residues long: Putative matrix metalloproteinase (474 aa).

An N-terminal signal peptide occupies residues 1 to 17 (MIIYFAVITCSLKLCRS). His-189 serves as a coordination point for Zn(2+). Residue Glu-190 is part of the active site. His-193 and His-199 together coordinate Zn(2+). The stretch at 299–344 (AGVYDAISYVRGDLYVFVGDLHWRFDTSGMLHNGYPQPTGATWRLP) is one Hemopexin repeat.

Belongs to the peptidase M10A family. Zn(2+) is required as a cofactor.

This chain is Putative matrix metalloproteinase, found in Heliothis virescens ascovirus 3e (HvAV-3e).